The sequence spans 595 residues: DNA damage-binding protein CMR1 (595 aa).

The segment at 20–79 is disordered; sequence ALLDSLGLDPAGASSPFGSSPAPTSNKTKPKPKPAPKKRKAAAVIAVDEGPRRRSGRIAG. Low complexity predominate over residues 29 to 46; it reads PAGASSPFGSSPAPTSNK. Basic residues predominate over residues 47–60; that stretch reads TKPKPKPAPKKRKA. WD repeat units follow at residues 185–226, 255–297, 300–339, and 349–389; these read VTNE…MEKP, HAKN…ELFS, DEDLLINHFDLLPSAQEAWMVDKNGGISHWDTRESKRESG, and GRGA…SISS. The segment at 397-429 is disordered; that stretch reads AIEEEEEGTSTLSGQSSSLPHDTHPTRESDYST. Over residues 405–415 the composition is skewed to low complexity; it reads TSTLSGQSSSL. The span at 417–426 shows a compositional bias: basic and acidic residues; sequence HDTHPTRESD. WD repeat units follow at residues 448–487, 519–556, and 558–595; these read QHGKSCSSAYWDPWGRRILTTSYDDHLRVFNIDPGSSLVD, LRAQWSLNMEYMPHFTVGNMKRTLDVVSATGEKIVGLW, and DDVTAVPTVTASHPNIVDRVVGGNTSGRIQLWSSGDHI.

The protein belongs to the WD repeat DDB2/WDR76 family.

Its function is as follows. DNA-binding protein that binds to both single- and double-stranded DNA. Binds preferentially to UV-damaged DNA. May be involved in DNA-metabolic processes. This chain is DNA damage-binding protein CMR1, found in Cryptococcus neoformans var. neoformans serotype D (strain B-3501A) (Filobasidiella neoformans).